The chain runs to 104 residues: Hydrogen cyanide synthase subunit HcnA (104 aa).

Residues 16–97 (ADMTIHLNGQ…GMRVETESNR (82 aa)) enclose the 2Fe-2S ferredoxin-type domain. Residues cysteine 60, cysteine 65, cysteine 68, and cysteine 81 each contribute to the [2Fe-2S] cluster site.

In terms of assembly, heterotrimer of HcnA, HcnB and HcnC.

The protein resides in the cell membrane. It carries out the reaction glycine + 2 A = hydrogen cyanide + 2 AH2 + CO2. Oxygen is necessary for cyanogenesis. Activated by succinate, glycine methyl ester, glucose and D,L-methionine in addition to glycine. Phenazine methosulfate, methylene blue, 2,6-dichlorophenolindophenol (DCIP) and ferricyanide can replace oxygen for the reaction. Inhibited by pyrrolnitrin and acriflavine at 1 mM concentration. Functionally, a three-component membrane-bound flavoenzyme that catalyzes the formation of hydrogen cyanide, a secondary metabolite, by transfer of electrons to a cyanide-resistant branch of the aerobic respiratory chain. The protein is Hydrogen cyanide synthase subunit HcnA of Pseudomonas aeruginosa (strain ATCC 15692 / DSM 22644 / CIP 104116 / JCM 14847 / LMG 12228 / 1C / PRS 101 / PAO1).